A 228-amino-acid chain; its full sequence is Cytochrome c oxidase subunit 2 (228 aa).

Topologically, residues 1-26 (MSQWFQLGLQNGNSPLMEQLIFFHDH) are mitochondrial intermembrane. Residues 27–48 (ALLVVILITSLVGFFLAALFSN) traverse the membrane as a helical segment. Residues 49–62 (KFLHRYLLDGQAIE) lie on the Mitochondrial matrix side of the membrane. A helical membrane pass occupies residues 63 to 82 (TVWTVIPAIILVAIALPSIR). Over 83 to 228 (LLYLIDEIHN…FLKWLELQIS (146 aa)) the chain is Mitochondrial intermembrane. His-161, Cys-196, Glu-198, Cys-200, His-204, and Met-207 together coordinate Cu cation. Mg(2+) is bound at residue Glu-198.

Belongs to the cytochrome c oxidase subunit 2 family. Component of the cytochrome c oxidase (complex IV, CIV), a multisubunit enzyme composed of a catalytic core of 3 subunits and several supernumerary subunits. The complex exists as a monomer or a dimer and forms supercomplexes (SCs) in the inner mitochondrial membrane with ubiquinol-cytochrome c oxidoreductase (cytochrome b-c1 complex, complex III, CIII). Cu cation is required as a cofactor.

It is found in the mitochondrion inner membrane. It catalyses the reaction 4 Fe(II)-[cytochrome c] + O2 + 8 H(+)(in) = 4 Fe(III)-[cytochrome c] + 2 H2O + 4 H(+)(out). Component of the cytochrome c oxidase, the last enzyme in the mitochondrial electron transport chain which drives oxidative phosphorylation. The respiratory chain contains 3 multisubunit complexes succinate dehydrogenase (complex II, CII), ubiquinol-cytochrome c oxidoreductase (cytochrome b-c1 complex, complex III, CIII) and cytochrome c oxidase (complex IV, CIV), that cooperate to transfer electrons derived from NADH and succinate to molecular oxygen, creating an electrochemical gradient over the inner membrane that drives transmembrane transport and the ATP synthase. Cytochrome c oxidase is the component of the respiratory chain that catalyzes the reduction of oxygen to water. Electrons originating from reduced cytochrome c in the intermembrane space (IMS) are transferred via the dinuclear copper A center (CU(A)) of subunit 2 and heme A of subunit 1 to the active site in subunit 1, a binuclear center (BNC) formed by heme A3 and copper B (CU(B)). The BNC reduces molecular oxygen to 2 water molecules using 4 electrons from cytochrome c in the IMS and 4 protons from the mitochondrial matrix. The polypeptide is Cytochrome c oxidase subunit 2 (COII) (Artemia franciscana (Brine shrimp)).